The chain runs to 565 residues: O-fucosyltransferase 7 (565 aa).

Residues 17–37 (VLIWAICVMTLLCFLTVHIYV) form a helical; Signal-anchor for type II membrane protein membrane-spanning segment. N-linked (GlcNAc...) asparagine glycosylation is found at N62, N73, N104, N124, and N190. Residue 327–329 (HLR) coordinates substrate. N-linked (GlcNAc...) asparagine glycosylation is present at N441. The segment at 515 to 565 (NEIHKTRQGSPRRRKGPASGTKGLERHRSEESFYENPLPDCLCQRDPSKAR) is disordered. Over residues 520-530 (TRQGSPRRRKG) the composition is skewed to basic residues.

It belongs to the glycosyltransferase GT106 family.

It localises to the membrane. It participates in glycan metabolism. The polypeptide is O-fucosyltransferase 7 (Arabidopsis thaliana (Mouse-ear cress)).